A 155-amino-acid chain; its full sequence is Small ribosomal subunit protein uS7cz/uS7cy (155 aa).

The protein belongs to the universal ribosomal protein uS7 family. In terms of assembly, part of the 30S ribosomal subunit.

The protein localises to the plastid. The protein resides in the chloroplast. In terms of biological role, one of the primary rRNA binding proteins, it binds directly to 16S rRNA where it nucleates assembly of the head domain of the 30S subunit. The polypeptide is Small ribosomal subunit protein uS7cz/uS7cy (rps7-A) (Oenothera argillicola (Appalachian evening primrose)).